The chain runs to 113 residues: Colicin-E1 immunity protein (113 aa).

Its function is as follows. This protein is able to protect a cell, which harbors the plasmid ColE1 encoding colicin E1, against colicin E1. This chain is Colicin-E1 immunity protein (imm), found in Escherichia coli.